Reading from the N-terminus, the 335-residue chain is Zinc-type alcohol dehydrogenase-like protein SAR2277 (335 aa).

The protein belongs to the zinc-containing alcohol dehydrogenase family. Quinone oxidoreductase subfamily.

In Staphylococcus aureus (strain MRSA252), this protein is Zinc-type alcohol dehydrogenase-like protein SAR2277.